The following is a 207-amino-acid chain: Hemin/hemoglobin-binding protein 1 (207 aa).

Residues 1–27 (MKKVLVFAAFIVLFSFSFLSTGLTAQA) form the signal peptide. The NEAT domain occupies 29–148 (LKDGTYSVDY…RFDEGSAKAL (120 aa)). The tract at residues 151 to 178 (AVKSSDNNTTTPATKSDSSNKVTNPKSS) is disordered. The segment covering 154-178 (SSDNNTTTPATKSDSSNKVTNPKSS) has biased composition (polar residues). The short motif at 174–178 (NPKSS) is the NPKXZ sorting signal element. Serine 177 carries the murein peptidoglycan amidated serine modification. The propeptide at 178 to 207 (SDSSQMFLYGIIFVATGAGLILLKRRAIFK) is removed by sortase B.

The protein localises to the secreted. The protein resides in the cell wall. Functionally, binds both host hemin and hemoglobin with affinity in the nanomolar range and presumably directs it to membrane transporters. The polypeptide is Hemin/hemoglobin-binding protein 1 (Listeria monocytogenes serovar 1/2a (strain ATCC BAA-679 / EGD-e)).